The following is a 688-amino-acid chain: Putative proline--tRNA ligase YHR020W (688 aa).

Residue serine 149 is modified to Phosphoserine. Threonine 170 is subject to Phosphothreonine. The interval 631–650 (ESSAKKDDGEEFEEDDKAPS) is disordered. The residue at position 655 (serine 655) is a Phosphoserine.

Belongs to the class-II aminoacyl-tRNA synthetase family.

It carries out the reaction tRNA(Pro) + L-proline + ATP = L-prolyl-tRNA(Pro) + AMP + diphosphate. This Saccharomyces cerevisiae (strain ATCC 204508 / S288c) (Baker's yeast) protein is Putative proline--tRNA ligase YHR020W.